The chain runs to 320 residues: Ferrochelatase (320 aa).

Residues histidine 194 and glutamate 275 each contribute to the Fe cation site.

Belongs to the ferrochelatase family. As to quaternary structure, monomer.

The protein resides in the cytoplasm. The enzyme catalyses heme b + 2 H(+) = protoporphyrin IX + Fe(2+). It functions in the pathway porphyrin-containing compound metabolism; protoheme biosynthesis; protoheme from protoporphyrin-IX: step 1/1. In terms of biological role, catalyzes the ferrous insertion into protoporphyrin IX. The polypeptide is Ferrochelatase (Salmonella dublin (strain CT_02021853)).